We begin with the raw amino-acid sequence, 181 residues long: Malignant T-cell-amplified sequence 2 (181 aa).

In terms of domain architecture, PUA spans Leu-92–Asn-171.

It belongs to the MCTS1 family.

It localises to the cytoplasm. This chain is Malignant T-cell-amplified sequence 2, found in Mus musculus (Mouse).